Here is a 90-residue protein sequence, read N- to C-terminus: Small ribosomal subunit protein bS16 (90 aa).

Belongs to the bacterial ribosomal protein bS16 family.

This is Small ribosomal subunit protein bS16 from Streptococcus pneumoniae (strain Hungary19A-6).